The following is a 434-amino-acid chain: Probable transcription factor HMS1 (434 aa).

A bHLH domain is found at 266-341; the sequence is TGRVSHNIIE…TKSIEYICHL (76 aa). Residues 365–434 form a disordered region; that stretch reads HLTEPSQPLS…DMDFNNAGDF (70 aa). Polar residues-rich tracts occupy residues 368 to 382 and 402 to 423; these read EPSQ…SEQV and PLHN…TNNS.

Interacts with the G1/S-specific cyclin PCL1. Post-translationally, phosphorylated by the cyclin-CDK complex PCL1-PHO85.

It localises to the nucleus. Functionally, involved in exit from mitosis and pseudohyphal differentiation. The polypeptide is Probable transcription factor HMS1 (HMS1) (Saccharomyces cerevisiae (strain ATCC 204508 / S288c) (Baker's yeast)).